A 275-amino-acid polypeptide reads, in one-letter code: Sororin-B (275 aa).

The span at 1 to 16 (MSERKKRGSSDADSRR) shows a compositional bias: basic and acidic residues. 2 disordered regions span residues 1–42 (MSER…PAPI) and 63–117 (NTGS…EIDV). Polar residues-rich tracts occupy residues 63-76 (NTGS…SNVT) and 93-112 (NAFS…QSSA). A KEN box motif is present at residues 91 to 93 (KEN). The FGF motif signature appears at 186 to 188 (FGF). Residues 253–275 (VDEWAAIMNAEFDEAEKFDLTVE) form a C-terminal Sororin domain region.

It belongs to the sororin family. In terms of assembly, interacts with the APC/C complex. Interacts with the chromatin-bound cohesin complex; the interaction is indirect, occurs after DNA replication and requires acetylation of the cohesin component smc3. Interacts (via the FGF motif) with pds5a and pds5b; the interaction is direct and prevents the interaction of pds5a with wapl. Post-translationally, ubiquitinated by the APC/C complex in G1, leading to its degradation.

Its subcellular location is the nucleus. It is found in the chromosome. The protein resides in the cytoplasm. Regulator of sister chromatid cohesion in mitosis stabilizing cohesin complex association with chromatin. May antagonize the action of wapl which stimulates cohesin dissociation from chromatin. Cohesion ensures that chromosome partitioning is accurate in both meiotic and mitotic cells and plays an important role in DNA repair. Required for efficient DNA double-stranded break repair. This is Sororin-B (cdca5-b) from Xenopus laevis (African clawed frog).